A 535-amino-acid chain; its full sequence is Putative cysteine ligase BshC (535 aa).

The stretch at 420–477 (DTFKALKESINSAYKNLQEKLAPLGADFQKLTGENLGRVMAQVKYLEERAQKYHREKN) forms a coiled coil.

This sequence belongs to the BshC family.

Its function is as follows. Involved in bacillithiol (BSH) biosynthesis. May catalyze the last step of the pathway, the addition of cysteine to glucosamine malate (GlcN-Mal) to generate BSH. The sequence is that of Putative cysteine ligase BshC from Carboxydothermus hydrogenoformans (strain ATCC BAA-161 / DSM 6008 / Z-2901).